The chain runs to 201 residues: Imidazoleglycerol-phosphate dehydratase (201 aa).

This sequence belongs to the imidazoleglycerol-phosphate dehydratase family.

It localises to the cytoplasm. It catalyses the reaction D-erythro-1-(imidazol-4-yl)glycerol 3-phosphate = 3-(imidazol-4-yl)-2-oxopropyl phosphate + H2O. It participates in amino-acid biosynthesis; L-histidine biosynthesis; L-histidine from 5-phospho-alpha-D-ribose 1-diphosphate: step 6/9. This Prochlorococcus marinus (strain AS9601) protein is Imidazoleglycerol-phosphate dehydratase.